The sequence spans 435 residues: Eukaryotic translation initiation factor 3 subunit E (435 aa).

Residues 219–392 (FFNHPKGRDL…GHVVMGTQPL (174 aa)) form the PCI domain.

Belongs to the eIF-3 subunit E family. As to quaternary structure, component of the eukaryotic translation initiation factor 3 (eIF-3) complex. The eIF-3 complex interacts with pix. Interacts with mxt.

The protein localises to the cytoplasm. In terms of biological role, component of the eukaryotic translation initiation factor 3 (eIF-3) complex, which is involved in protein synthesis of a specialized repertoire of mRNAs and, together with other initiation factors, stimulates binding of mRNA and methionyl-tRNAi to the 40S ribosome. The eIF-3 complex specifically targets and initiates translation of a subset of mRNAs involved in cell proliferation. This is Eukaryotic translation initiation factor 3 subunit E (eIF3-S6) from Drosophila erecta (Fruit fly).